A 584-amino-acid chain; its full sequence is 2-isopropylmalate synthase (584 aa).

The Pyruvate carboxyltransferase domain maps to 45–323; it reads PRWLSTDLRD…SPNLDFSKLD (279 aa). Positions 54, 262, 264, and 298 each coordinate a divalent metal cation.

The protein belongs to the alpha-IPM synthase/homocitrate synthase family. LeuA type 2 subfamily. In terms of assembly, homodimer. A divalent metal cation serves as cofactor.

It carries out the reaction 3-methyl-2-oxobutanoate + acetyl-CoA + H2O = (2S)-2-isopropylmalate + CoA + H(+). It participates in amino-acid biosynthesis; L-leucine biosynthesis; L-leucine from 3-methyl-2-oxobutanoate: step 1/4. Its function is as follows. Catalyzes the condensation of the acetyl group of acetyl-CoA with 3-methyl-2-oxobutanoate (2-oxoisovalerate) to form 3-carboxy-3-hydroxy-4-methylpentanoate (2-isopropylmalate). This is 2-isopropylmalate synthase (leu3) from Schizosaccharomyces pombe (strain 972 / ATCC 24843) (Fission yeast).